Consider the following 179-residue polypeptide: Large ribosomal subunit protein uL6 (179 aa).

It belongs to the universal ribosomal protein uL6 family. In terms of assembly, part of the 50S ribosomal subunit.

Its function is as follows. This protein binds to the 23S rRNA, and is important in its secondary structure. It is located near the subunit interface in the base of the L7/L12 stalk, and near the tRNA binding site of the peptidyltransferase center. This is Large ribosomal subunit protein uL6 from Persephonella marina (strain DSM 14350 / EX-H1).